A 419-amino-acid chain; its full sequence is 3-isopropylmalate dehydratase large subunit (419 aa).

3 residues coordinate [4Fe-4S] cluster: Cys302, Cys362, and Cys365.

The protein belongs to the aconitase/IPM isomerase family. LeuC type 2 subfamily. Heterodimer of LeuC and LeuD. Requires [4Fe-4S] cluster as cofactor.

It catalyses the reaction (2R,3S)-3-isopropylmalate = (2S)-2-isopropylmalate. It functions in the pathway amino-acid biosynthesis; L-leucine biosynthesis; L-leucine from 3-methyl-2-oxobutanoate: step 2/4. In terms of biological role, catalyzes the isomerization between 2-isopropylmalate and 3-isopropylmalate, via the formation of 2-isopropylmaleate. This is 3-isopropylmalate dehydratase large subunit from Sulfurimonas denitrificans (strain ATCC 33889 / DSM 1251) (Thiomicrospira denitrificans (strain ATCC 33889 / DSM 1251)).